The chain runs to 926 residues: MAASPNPLQGSLFEESKQSTTNGGKETNNSIGSSENLSNQQLKSDASLRPRIRKTSKNPNQINDLDQLSNAEIEEPKWSHHNLPKIDDLTPALKHYVQLKIENPDRVLLYRLGDFFECFFEDAITLSQLLEITLTSKEGGKKIGKVPMAGIPHHASDRYCTELIKKGLSIAICDQLEAAPSKGNKLIKRGITRLITPGTIIEEGMLSAKQNNWLASVLLESDSNSDFVNWSLAKLDVSTGEFLVQEGKETNNLRQELIKLKAAEVISESKSISNQNWYKGLIEITEFNQTSFSRLEAKTTIENHYFLNNIDGLGIHPESLSIRTIGGLIAYLNKTHPNIGNNLKNEVKTNICIDFPQIKHNQAGLIIDNQTRRNLEITSTQKNGQFQGSLLWAIDKTLTAMGGRCIRRWLEEPLTEIYSIQSRQKIIGLLVESSSLRKNIRKILRAMGDLERLSGRAGAQQAGARDLIAIAEGINRLPLIKKYLNDPIFEETKYFESIINLDRDLIELASKINNEIIDNPPLSLTEGGLIFDGVNPILDGLRNQLDDHNSWLKSQEIEERKNSNINNLKLQYHRSFGYFLAVSKAKSINVPDHWIRRQTLTNEERFVTPELKEREGKIFQLRARISQLEYDLFCKLRILVGNKSDIIRKAAKAISCLDVLSGLAELAATNNYIQPKIIDNKDSTKTRRLSIVDGRHPVVEQILVDKFFVPNDIELGSKTDLIILSGPNASGKSCYLRQVGLLQIMAQIGSWIPAKSANIGIADQLFTRVGAVDDLASGQSTFMVEMIETAFILNNATENSLVLLDEIGRGTSTFDGLSIAWSVSEFLAKKIKSRSIFATHYHELNQISEYIENVENYKVVVEYKNHSLSFLHKVEKGGANKSYGIEAARLAGVPPDVVNNARLILKNLEKNNSNTIQITKPIESCK.

The interval 1–67 is disordered; the sequence is MAASPNPLQG…NPNQINDLDQ (67 aa). Composition is skewed to polar residues over residues 18–44 and 57–67; these read QSTT…QLKS and KNPNQINDLDQ. 726-733 provides a ligand contact to ATP; the sequence is GPNASGKS.

It belongs to the DNA mismatch repair MutS family.

This protein is involved in the repair of mismatches in DNA. It is possible that it carries out the mismatch recognition step. This protein has a weak ATPase activity. The protein is DNA mismatch repair protein MutS of Prochlorococcus marinus (strain NATL1A).